The following is a 658-amino-acid chain: Scarecrow-like protein 28 (658 aa).

3 disordered regions span residues 43-85, 96-115, and 209-265; these read PCSS…TSGC, LATTRGNGEGFSWNNDNNNR, and PAAV…NNNR. Residues 214-228 show a composition bias toward low complexity; sequence EASGGSSTSASSESR. Residues 265–654 form the GRAS domain; it reads RNDLQRDFEL…QPLYTISAWT (390 aa). The segment at 272-336 is leucine repeat I (LRI); that stretch reads FELVNLLTGC…VARMWPHIFH (65 aa). A VHIID region spans residues 355–420; it reads LRFLNQVTPI…NPPHHVRITG (66 aa). Residues 386-390 carry the VHIID motif; it reads VHIID. The segment at 430-462 is leucine repeat II (LRII); that stretch reads ETGDRLHGFAEAMNLQFEFHPVVDRLEDVRLWM. Residues 471 to 563 are PFYRE; sequence VAVNCVMQMH…EMLFGREIRN (93 aa). The tract at residues 566–654 is SAW; that stretch reads ACEGSHRQER…QPLYTISAWT (89 aa).

This sequence belongs to the GRAS family. Interacts with SNRNP35 and CYP95. Expressed in roots and sepals.

It is found in the nucleus. Probable transcription factor involved in plant development. The chain is Scarecrow-like protein 28 (SCL28) from Arabidopsis thaliana (Mouse-ear cress).